The chain runs to 95 residues: UPF0125 protein BUsg_244 (95 aa).

Belongs to the UPF0125 (RnfH) family.

This is UPF0125 protein BUsg_244 from Buchnera aphidicola subsp. Schizaphis graminum (strain Sg).